Reading from the N-terminus, the 70-residue chain is Putative defensin-like protein 73 (70 aa).

The N-terminal stretch at 1-29 (MNCKIEFMSFLVMTSIVILFLFVSGKVEA) is a signal peptide. Cystine bridges form between C33–C68, C37–C57, C43–C66, and C47–C67.

This sequence belongs to the DEFL family.

It is found in the secreted. The protein is Putative defensin-like protein 73 (LCR44) of Arabidopsis thaliana (Mouse-ear cress).